We begin with the raw amino-acid sequence, 273 residues long: Large ribosomal subunit protein uL2cy (273 aa).

2 disordered regions span residues 1 to 27 (MAIHLYKTSTPSTRNGAVDSQVKSNPR) and 224 to 273 (NPVD…RRRK).

It belongs to the universal ribosomal protein uL2 family. As to quaternary structure, part of the 50S ribosomal subunit.

It is found in the plastid. The protein localises to the chloroplast. The protein is Large ribosomal subunit protein uL2cy (rpl2-B) of Liriodendron tulipifera (Tuliptree).